The chain runs to 234 residues: Peptidase E (234 aa).

Residues S123, D138, and H160 each act as charge relay system in the active site.

The protein belongs to the peptidase S51 family.

It localises to the cytoplasm. The enzyme catalyses Dipeptidase E catalyzes the hydrolysis of dipeptides Asp-|-Xaa. It does not act on peptides with N-terminal Glu, Asn or Gln, nor does it cleave isoaspartyl peptides.. Hydrolyzes dipeptides containing N-terminal aspartate residues. May play a role in allowing the cell to use peptide aspartate to spare carbon otherwise required for the synthesis of the aspartate family of amino acids. This chain is Peptidase E, found in Pasteurella multocida (strain Pm70).